We begin with the raw amino-acid sequence, 125 residues long: S-adenosylmethionine decarboxylase proenzyme (125 aa).

Serine 71 functions as the Schiff-base intermediate with substrate; via pyruvic acid in the catalytic mechanism. Serine 71 carries the post-translational modification Pyruvic acid (Ser); by autocatalysis. Histidine 76 (proton acceptor; for processing activity) is an active-site residue. Catalysis depends on cysteine 91, which acts as the Proton donor; for catalytic activity.

Belongs to the prokaryotic AdoMetDC family. Type 1 subfamily. As to quaternary structure, heterotetramer of two alpha and two beta chains arranged as a dimer of alpha/beta heterodimers. Requires pyruvate as cofactor. Is synthesized initially as an inactive proenzyme. Formation of the active enzyme involves a self-maturation process in which the active site pyruvoyl group is generated from an internal serine residue via an autocatalytic post-translational modification. Two non-identical subunits are generated from the proenzyme in this reaction, and the pyruvate is formed at the N-terminus of the alpha chain, which is derived from the carboxyl end of the proenzyme. The post-translation cleavage follows an unusual pathway, termed non-hydrolytic serinolysis, in which the side chain hydroxyl group of the serine supplies its oxygen atom to form the C-terminus of the beta chain, while the remainder of the serine residue undergoes an oxidative deamination to produce ammonia and the pyruvoyl group blocking the N-terminus of the alpha chain.

It carries out the reaction S-adenosyl-L-methionine + H(+) = S-adenosyl 3-(methylsulfanyl)propylamine + CO2. It functions in the pathway amine and polyamine biosynthesis; S-adenosylmethioninamine biosynthesis; S-adenosylmethioninamine from S-adenosyl-L-methionine: step 1/1. In terms of biological role, catalyzes the decarboxylation of S-adenosylmethionine to S-adenosylmethioninamine (dcAdoMet), the propylamine donor required for the synthesis of the polyamines spermine and spermidine from the diamine putrescine. The sequence is that of S-adenosylmethionine decarboxylase proenzyme from Pyrobaculum arsenaticum (strain DSM 13514 / JCM 11321 / PZ6).